The chain runs to 307 residues: Elongation factor Ts (307 aa).

An involved in Mg(2+) ion dislocation from EF-Tu region spans residues 80–83 (TDFV).

Belongs to the EF-Ts family.

The protein resides in the cytoplasm. Associates with the EF-Tu.GDP complex and induces the exchange of GDP to GTP. It remains bound to the aminoacyl-tRNA.EF-Tu.GTP complex up to the GTP hydrolysis stage on the ribosome. The sequence is that of Elongation factor Ts from Azorhizobium caulinodans (strain ATCC 43989 / DSM 5975 / JCM 20966 / LMG 6465 / NBRC 14845 / NCIMB 13405 / ORS 571).